Consider the following 69-residue polypeptide: Large ribosomal subunit protein uL29 (69 aa).

Belongs to the universal ribosomal protein uL29 family.

This is Large ribosomal subunit protein uL29 (rpmC) from Lactococcus lactis subsp. lactis (strain IL1403) (Streptococcus lactis).